The chain runs to 382 residues: Bifunctional enzyme IspD/IspF (382 aa).

Residues 1-225 (MTGKPSIAAL…AEERMAMISR (225 aa)) are 2-C-methyl-D-erythritol 4-phosphate cytidylyltransferase. The tract at residues 225–382 (RTAMGFDVHG…AVATVRVPSI (158 aa)) is 2-C-methyl-D-erythritol 2,4-cyclodiphosphate synthase. Asp-231 and His-233 together coordinate a divalent metal cation. 4-CDP-2-C-methyl-D-erythritol 2-phosphate contacts are provided by residues 231 to 233 (DVH) and 257 to 258 (HS). His-265 lines the a divalent metal cation pocket. Residues 279–281 (DIG), 355–358 (TTTE), Phe-362, and Arg-365 contribute to the 4-CDP-2-C-methyl-D-erythritol 2-phosphate site.

This sequence in the N-terminal section; belongs to the IspD/TarI cytidylyltransferase family. IspD subfamily. It in the C-terminal section; belongs to the IspF family. A divalent metal cation serves as cofactor.

The enzyme catalyses 2-C-methyl-D-erythritol 4-phosphate + CTP + H(+) = 4-CDP-2-C-methyl-D-erythritol + diphosphate. The catalysed reaction is 4-CDP-2-C-methyl-D-erythritol 2-phosphate = 2-C-methyl-D-erythritol 2,4-cyclic diphosphate + CMP. Its pathway is isoprenoid biosynthesis; isopentenyl diphosphate biosynthesis via DXP pathway; isopentenyl diphosphate from 1-deoxy-D-xylulose 5-phosphate: step 2/6. The protein operates within isoprenoid biosynthesis; isopentenyl diphosphate biosynthesis via DXP pathway; isopentenyl diphosphate from 1-deoxy-D-xylulose 5-phosphate: step 4/6. Its function is as follows. Bifunctional enzyme that catalyzes the formation of 4-diphosphocytidyl-2-C-methyl-D-erythritol from CTP and 2-C-methyl-D-erythritol 4-phosphate (MEP) (IspD), and catalyzes the conversion of 4-diphosphocytidyl-2-C-methyl-D-erythritol 2-phosphate (CDP-ME2P) to 2-C-methyl-D-erythritol 2,4-cyclodiphosphate (ME-CPP) with a corresponding release of cytidine 5-monophosphate (CMP) (IspF). The polypeptide is Bifunctional enzyme IspD/IspF (Rhizorhabdus wittichii (strain DSM 6014 / CCUG 31198 / JCM 15750 / NBRC 105917 / EY 4224 / RW1) (Sphingomonas wittichii)).